A 156-amino-acid chain; its full sequence is ATP synthase subunit b (156 aa).

A helical membrane pass occupies residues 7-27 (IFFQMLVFFVLGWFTMKFVWP).

This sequence belongs to the ATPase B chain family. In terms of assembly, F-type ATPases have 2 components, F(1) - the catalytic core - and F(0) - the membrane proton channel. F(1) has five subunits: alpha(3), beta(3), gamma(1), delta(1), epsilon(1). F(0) has three main subunits: a(1), b(2) and c(10-14). The alpha and beta chains form an alternating ring which encloses part of the gamma chain. F(1) is attached to F(0) by a central stalk formed by the gamma and epsilon chains, while a peripheral stalk is formed by the delta and b chains.

The protein localises to the cell inner membrane. Functionally, f(1)F(0) ATP synthase produces ATP from ADP in the presence of a proton or sodium gradient. F-type ATPases consist of two structural domains, F(1) containing the extramembraneous catalytic core and F(0) containing the membrane proton channel, linked together by a central stalk and a peripheral stalk. During catalysis, ATP synthesis in the catalytic domain of F(1) is coupled via a rotary mechanism of the central stalk subunits to proton translocation. Its function is as follows. Component of the F(0) channel, it forms part of the peripheral stalk, linking F(1) to F(0). This Bordetella pertussis (strain Tohama I / ATCC BAA-589 / NCTC 13251) protein is ATP synthase subunit b.